A 136-amino-acid chain; its full sequence is Large ribosomal subunit protein bL17 (136 aa).

The protein belongs to the bacterial ribosomal protein bL17 family. Part of the 50S ribosomal subunit. Contacts protein L32.

In Rickettsia conorii (strain ATCC VR-613 / Malish 7), this protein is Large ribosomal subunit protein bL17.